The chain runs to 96 residues: Small ribosomal subunit protein bS6 (96 aa).

It belongs to the bacterial ribosomal protein bS6 family.

In terms of biological role, binds together with bS18 to 16S ribosomal RNA. The chain is Small ribosomal subunit protein bS6 from Nocardioides sp. (strain ATCC BAA-499 / JS614).